The chain runs to 164 residues: MKSVVTTVVTAADAAGRFLSQNDLEAVQGNIQRAAARLEAAEKLAAGLDKVTREAGDACFNKYSYLKQPGEAGDSQVKVDKCYRDLGHYLRLINYCLVVGGTGPLDEWGIAGAREVYRSLSLPTGPYVEALTYTRDRACAPRDMSPQALNEFKSYLDYVINALS.

Cys82 and Cys139 together coordinate (2R,3E)-phycoerythrobilin.

It belongs to the phycobiliprotein family. As to quaternary structure, heterodimer of an alpha and a beta chain. Contains two covalently linked phycoerythrobilin chromophores.

The protein localises to the cellular thylakoid membrane. Its function is as follows. Light-harvesting photosynthetic bile pigment-protein from the phycobiliprotein complex. In Synechococcus sp. (strain WH8020), this protein is C-phycoerythrin class 1 subunit alpha (cpeA).